We begin with the raw amino-acid sequence, 297 residues long: Homoserine kinase (297 aa).

Pro-82–Ala-92 lines the ATP pocket.

The protein belongs to the GHMP kinase family. Homoserine kinase subfamily.

The protein resides in the cytoplasm. The enzyme catalyses L-homoserine + ATP = O-phospho-L-homoserine + ADP + H(+). It functions in the pathway amino-acid biosynthesis; L-threonine biosynthesis; L-threonine from L-aspartate: step 4/5. Functionally, catalyzes the ATP-dependent phosphorylation of L-homoserine to L-homoserine phosphate. The chain is Homoserine kinase from Clostridium botulinum (strain Langeland / NCTC 10281 / Type F).